The chain runs to 448 residues: Chromosomal replication initiator protein DnaA (448 aa).

The interval 1 to 73 (MNAQLKQLWT…INAIKLITSK (73 aa)) is domain I, interacts with DnaA modulators. Positions 73-109 (KKYNIEFSITSEEIFNNQQLKPKSSNDNIVVNDEMTS) are domain II. The domain III, AAA+ region stretch occupies residues 110-326 (ILNPKYTFDS…GALIRIVAYS (217 aa)). Positions 154, 156, 157, and 158 each coordinate ATP. Residues 327–448 (SLTNREISVD…DDLNKKITNN (122 aa)) form a domain IV, binds dsDNA region.

It belongs to the DnaA family. As to quaternary structure, oligomerizes as a right-handed, spiral filament on DNA at oriC.

Its subcellular location is the cytoplasm. Its function is as follows. Plays an essential role in the initiation and regulation of chromosomal replication. ATP-DnaA binds to the origin of replication (oriC) to initiate formation of the DNA replication initiation complex once per cell cycle. Binds the DnaA box (a 9 base pair repeat at the origin) and separates the double-stranded (ds)DNA. Forms a right-handed helical filament on oriC DNA; dsDNA binds to the exterior of the filament while single-stranded (ss)DNA is stabiized in the filament's interior. The ATP-DnaA-oriC complex binds and stabilizes one strand of the AT-rich DNA unwinding element (DUE), permitting loading of DNA polymerase. After initiation quickly degrades to an ADP-DnaA complex that is not apt for DNA replication. Binds acidic phospholipids. The sequence is that of Chromosomal replication initiator protein DnaA from Clostridium novyi (strain NT).